Consider the following 536-residue polypeptide: CTP synthase (536 aa).

Positions 1–267 (MSKFVFVTGG…CKETLKYLDL (267 aa)) are amidoligase domain. Ser13 serves as a coordination point for CTP. UTP is bound at residue Ser13. Residues 14-19 (SIGKGI) and Asp71 each bind ATP. Mg(2+)-binding residues include Asp71 and Glu141. CTP-binding positions include 148–150 (DIE), 188–193 (KTKPTQ), and Lys224. UTP contacts are provided by residues 188–193 (KTKPTQ) and Lys224. Positions 292–534 (KVALVGKYIE…IKASQDKLTQ (243 aa)) constitute a Glutamine amidotransferase type-1 domain. Gly354 is a binding site for L-glutamine. Cys381 serves as the catalytic Nucleophile; for glutamine hydrolysis. Residues 382–385 (LGMQ), Glu405, and Arg462 each bind L-glutamine. Catalysis depends on residues His507 and Glu509.

Belongs to the CTP synthase family. Homotetramer.

The enzyme catalyses UTP + L-glutamine + ATP + H2O = CTP + L-glutamate + ADP + phosphate + 2 H(+). The catalysed reaction is L-glutamine + H2O = L-glutamate + NH4(+). It carries out the reaction UTP + NH4(+) + ATP = CTP + ADP + phosphate + 2 H(+). It participates in pyrimidine metabolism; CTP biosynthesis via de novo pathway; CTP from UDP: step 2/2. Its activity is regulated as follows. Allosterically activated by GTP, when glutamine is the substrate; GTP has no effect on the reaction when ammonia is the substrate. The allosteric effector GTP functions by stabilizing the protein conformation that binds the tetrahedral intermediate(s) formed during glutamine hydrolysis. Inhibited by the product CTP, via allosteric rather than competitive inhibition. Functionally, catalyzes the ATP-dependent amination of UTP to CTP with either L-glutamine or ammonia as the source of nitrogen. Regulates intracellular CTP levels through interactions with the four ribonucleotide triphosphates. The protein is CTP synthase of Prochlorococcus marinus (strain AS9601).